Consider the following 466-residue polypeptide: 55 kDa erythrocyte membrane protein (466 aa).

The residue at position 2 (threonine 2) is an N-acetylthreonine. Residues serine 13 and serine 19 each carry the phosphoserine modification. A Phosphothreonine modification is found at threonine 49. A phosphoserine mark is found at serine 52, serine 57, and serine 110. Positions leucine 71 to glutamine 152 constitute a PDZ domain. Positions alanine 158 to valine 228 constitute an SH3 domain. Position 243 is a phosphoserine (serine 243). The interaction with PALS1 stretch occupies residues valine 268–tyrosine 466. In terms of domain architecture, Guanylate kinase-like spans arginine 282 to aspartate 451.

This sequence belongs to the MAGUK family. Heterodimer with PALS1. Interacts with DLG5 and NF2. Interacts (via guanylate kinase-like domain) with WHRN (via third PDZ domain). Palmitoylated.

The protein localises to the cell membrane. It is found in the cell projection. It localises to the stereocilium. Its function is as follows. Essential regulator of neutrophil polarity. Regulates neutrophil polarization by regulating AKT1 phosphorylation through a mechanism that is independent of PIK3CG activity. This chain is 55 kDa erythrocyte membrane protein (MPP1), found in Papio anubis (Olive baboon).